Reading from the N-terminus, the 458-residue chain is MENRYAIILAAGKGTRMKSKLYKVLHPVAGKPMVEHILDQVEQTEPTEIVTIVGHGAEMIKSHLGERSQYALQAEQLGTGHAVMQAQELLGGKQGTTLVITGDTPLLTAETLKNLFDYHQGKNASATILTAHAEDPTGYGRIIRDHVGIVERIVEQKDASEEEARVQEINTGTFCFDNESLFEALAKTDTNNTQGEYYLTDIIEILKKEGKAVAAYQMADFDEAMGVNDRVALSTANKIMHRRLNEMHMRNGVTFIDPDTTYIDEGVVIGSDTVIEAGVTIKGKTVIGEDCLIGAHSEIVDSHIGNQVVVKQSVIEESVVHEGADVGPYAHLRPKADVGANVHIGNFVEVKNATIDEGTKVGHLTYVGDATLGKDINVGCGVVFVNYDGKNKHQTIVGDHAFIGSATNIVAPVTIGDHAVTAAGSTITEDVPSEDLAIARARQVNKEGYAKKLPYMKD.

The pyrophosphorylase stretch occupies residues 1 to 230 (MENRYAIILA…FDEAMGVNDR (230 aa)). UDP-N-acetyl-alpha-D-glucosamine is bound by residues 9 to 12 (LAAG), K23, Q73, and 78 to 79 (GT). D103 is a Mg(2+) binding site. The UDP-N-acetyl-alpha-D-glucosamine site is built by G140, E155, N170, and N228. N228 contributes to the Mg(2+) binding site. Residues 231 to 251 (VALSTANKIMHRRLNEMHMRN) form a linker region. Positions 252–458 (GVTFIDPDTT…YAKKLPYMKD (207 aa)) are N-acetyltransferase. Residues R333 and K351 each coordinate UDP-N-acetyl-alpha-D-glucosamine. H363 (proton acceptor) is an active-site residue. Residues Y366 and N377 each coordinate UDP-N-acetyl-alpha-D-glucosamine. Acetyl-CoA-binding positions include 386–387 (NY), S405, A423, and R440.

The protein in the N-terminal section; belongs to the N-acetylglucosamine-1-phosphate uridyltransferase family. This sequence in the C-terminal section; belongs to the transferase hexapeptide repeat family. In terms of assembly, homotrimer. The cofactor is Mg(2+).

It is found in the cytoplasm. It catalyses the reaction alpha-D-glucosamine 1-phosphate + acetyl-CoA = N-acetyl-alpha-D-glucosamine 1-phosphate + CoA + H(+). The enzyme catalyses N-acetyl-alpha-D-glucosamine 1-phosphate + UTP + H(+) = UDP-N-acetyl-alpha-D-glucosamine + diphosphate. It functions in the pathway nucleotide-sugar biosynthesis; UDP-N-acetyl-alpha-D-glucosamine biosynthesis; N-acetyl-alpha-D-glucosamine 1-phosphate from alpha-D-glucosamine 6-phosphate (route II): step 2/2. It participates in nucleotide-sugar biosynthesis; UDP-N-acetyl-alpha-D-glucosamine biosynthesis; UDP-N-acetyl-alpha-D-glucosamine from N-acetyl-alpha-D-glucosamine 1-phosphate: step 1/1. The protein operates within bacterial outer membrane biogenesis; LPS lipid A biosynthesis. Its function is as follows. Catalyzes the last two sequential reactions in the de novo biosynthetic pathway for UDP-N-acetylglucosamine (UDP-GlcNAc). The C-terminal domain catalyzes the transfer of acetyl group from acetyl coenzyme A to glucosamine-1-phosphate (GlcN-1-P) to produce N-acetylglucosamine-1-phosphate (GlcNAc-1-P), which is converted into UDP-GlcNAc by the transfer of uridine 5-monophosphate (from uridine 5-triphosphate), a reaction catalyzed by the N-terminal domain. In Enterococcus faecalis (strain ATCC 700802 / V583), this protein is Bifunctional protein GlmU.